The chain runs to 1149 residues: Eukaryotic translation initiation factor 3 subunit A (1149 aa).

A PCI domain is found at 317-498 (IQRMTSHVLI…HSVHFGTDLS (182 aa)). Disordered regions lie at residues 496–515 (DLSESQREDHPDGPTLQSMP) and 811–1149 (EEER…KHHR). A compositionally biased stretch (basic and acidic residues) spans 811–885 (EEERRRIEEE…APRGEKEERG (75 aa)). The span at 886–895 (GGGGGGGAWR) shows a compositional bias: gly residues. Positions 908-924 (AKPESDWRNAREAREPA) are enriched in basic and acidic residues. A compositionally biased stretch (low complexity) spans 925–937 (PESAGASSAAAPA). Basic and acidic residues-rich tracts occupy residues 961–970 (RPPRGDDREP), 1005–1095 (GPMR…DRRG), and 1113–1132 (EPAKPREERRGGEERPKEAR).

It belongs to the eIF-3 subunit A family. In terms of assembly, component of the eukaryotic translation initiation factor 3 (eIF-3) complex.

The protein resides in the cytoplasm. RNA-binding component of the eukaryotic translation initiation factor 3 (eIF-3) complex, which is involved in protein synthesis of a specialized repertoire of mRNAs and, together with other initiation factors, stimulates binding of mRNA and methionyl-tRNAi to the 40S ribosome. The eIF-3 complex specifically targets and initiates translation of a subset of mRNAs involved in cell proliferation. This Culex quinquefasciatus (Southern house mosquito) protein is Eukaryotic translation initiation factor 3 subunit A.